We begin with the raw amino-acid sequence, 285 residues long: MSTERGLKDSIAGTVAGAACLFTGHPFDTIRVRLQTSNTPIGIMECFRNTIKYEGFSGLYKGVTSPLFGMMFETAVLFAGYGQMKVLLQKDENTPLTVGQCAIAGGFAGVGASVVLTPVELVKCRLQVQTTGPQKYKGSLDCLVQILKEGGIRGAYRGFTPTIAREFVGNMAFFSTYETCKRYFKNKENKPNDDDELNLPALIISGGLGGMAYWTVLYPVDVAKSKIQISEGAGPSPSIVKVLKEIYSKEGVKGLFRGYTPTIIRSFPANAAMFSVYELVIKLLG.

Over 1 to 9 (MSTERGLKD) the chain is Mitochondrial intermembrane. 3 Solcar repeats span residues 4-87 (ERGL…MKVL), 96-183 (LTVG…CKRY), and 197-283 (LNLP…VIKL). A helical membrane pass occupies residues 10–30 (SIAGTVAGAACLFTGHPFDTI). Residues 31–61 (RVRLQTSNTPIGIMECFRNTIKYEGFSGLYK) are Mitochondrial matrix-facing. The helical transmembrane segment at 62-82 (GVTSPLFGMMFETAVLFAGYG) threads the bilayer. Residues 83-101 (QMKVLLQKDENTPLTVGQC) lie on the Mitochondrial intermembrane side of the membrane. A helical transmembrane segment spans residues 102-122 (AIAGGFAGVGASVVLTPVELV). Residues 123–150 (KCRLQVQTTGPQKYKGSLDCLVQILKEG) are Mitochondrial matrix-facing. A helical membrane pass occupies residues 151–172 (GIRGAYRGFTPTIAREFVGNMA). Residues 173–199 (FFSTYETCKRYFKNKENKPNDDDELNL) are Mitochondrial intermembrane-facing. The chain crosses the membrane as a helical span at residues 200-220 (PALIISGGLGGMAYWTVLYPV). Residues 221–258 (DVAKSKIQISEGAGPSPSIVKVLKEIYSKEGVKGLFRG) lie on the Mitochondrial matrix side of the membrane. Residues 259–277 (YTPTIIRSFPANAAMFSVY) form a helical membrane-spanning segment. The Mitochondrial intermembrane segment spans residues 278 to 285 (ELVIKLLG).

The protein belongs to the mitochondrial carrier (TC 2.A.29) family.

It is found in the mitochondrion inner membrane. Its function is as follows. Mitochondrial solute carriers shuttle metabolites, nucleotides, and cofactors through the mitochondrial inner membrane. Mediates the transport of acylcarnitines of different length across the mitochondrial inner membrane from the cytosol to the mitochondrial matrix for their oxidation by the mitochondrial fatty acid-oxidation pathway. The chain is Mitochondrial substrate carrier family protein S (mcfS) from Dictyostelium discoideum (Social amoeba).